The primary structure comprises 153 residues: Large ribosomal subunit protein uL22 (153 aa).

The protein belongs to the universal ribosomal protein uL22 family. As to quaternary structure, part of the 50S ribosomal subunit.

In terms of biological role, this protein binds specifically to 23S rRNA. It makes multiple contacts with different domains of the 23S rRNA in the assembled 50S subunit and ribosome. Functionally, the globular domain of the protein is located near the polypeptide exit tunnel on the outside of the subunit, while an extended beta-hairpin is found that lines the wall of the exit tunnel in the center of the 70S ribosome. The sequence is that of Large ribosomal subunit protein uL22 from Methanococcus vannielii (strain ATCC 35089 / DSM 1224 / JCM 13029 / OCM 148 / SB).